We begin with the raw amino-acid sequence, 544 residues long: L-aspartate oxidase (544 aa).

Residues 17–20, Lys39, 46–53, and Asp221 each bind FAD; these read SGGA and STFYAQGG. The Proton donor/acceptor role is filled by Arg288. FAD-binding positions include Glu373 and 389–390; that span reads SL.

This sequence belongs to the FAD-dependent oxidoreductase 2 family. NadB subfamily. The cofactor is FAD.

The protein localises to the cytoplasm. The enzyme catalyses L-aspartate + O2 = iminosuccinate + H2O2. It functions in the pathway cofactor biosynthesis; NAD(+) biosynthesis; iminoaspartate from L-aspartate (oxidase route): step 1/1. Catalyzes the oxidation of L-aspartate to iminoaspartate, the first step in the de novo biosynthesis of NAD(+). The sequence is that of L-aspartate oxidase from Acinetobacter baylyi (strain ATCC 33305 / BD413 / ADP1).